The primary structure comprises 785 residues: Endonuclease MutS2 (785 aa).

Position 332-339 (332-339 (GPNTGGKT)) interacts with ATP. A Smr domain is found at 710–785 (IDLRGLDAEE…GDGATIVELK (76 aa)).

This sequence belongs to the DNA mismatch repair MutS family. MutS2 subfamily. As to quaternary structure, homodimer. Binds to stalled ribosomes, contacting rRNA.

Functionally, endonuclease that is involved in the suppression of homologous recombination and thus may have a key role in the control of bacterial genetic diversity. In terms of biological role, acts as a ribosome collision sensor, splitting the ribosome into its 2 subunits. Detects stalled/collided 70S ribosomes which it binds and splits by an ATP-hydrolysis driven conformational change. Acts upstream of the ribosome quality control system (RQC), a ribosome-associated complex that mediates the extraction of incompletely synthesized nascent chains from stalled ribosomes and their subsequent degradation. Probably generates substrates for RQC. This chain is Endonuclease MutS2, found in Clostridium botulinum (strain Eklund 17B / Type B).